We begin with the raw amino-acid sequence, 387 residues long: 3-ketoacyl-CoA thiolase (387 aa).

C91 (acyl-thioester intermediate) is an active-site residue. Catalysis depends on proton acceptor residues H343 and C373.

Belongs to the thiolase-like superfamily. Thiolase family. In terms of assembly, heterotetramer of two alpha chains (FadB) and two beta chains (FadA).

Its subcellular location is the cytoplasm. It carries out the reaction an acyl-CoA + acetyl-CoA = a 3-oxoacyl-CoA + CoA. The protein operates within lipid metabolism; fatty acid beta-oxidation. Functionally, catalyzes the final step of fatty acid oxidation in which acetyl-CoA is released and the CoA ester of a fatty acid two carbons shorter is formed. The polypeptide is 3-ketoacyl-CoA thiolase (Escherichia coli (strain UTI89 / UPEC)).